We begin with the raw amino-acid sequence, 119 residues long: MPRVKRGVTAHARHKKVIAQAKGYRGRRKNVYRVANQAITRASQYAYRDRRQRKRQFRALWIVRINAAARECGLSYSRLISGLKRAAIEIDRKVLADLAVRDKAAFTTIAEQAKVALSD.

This sequence belongs to the bacterial ribosomal protein bL20 family.

Binds directly to 23S ribosomal RNA and is necessary for the in vitro assembly process of the 50S ribosomal subunit. It is not involved in the protein synthesizing functions of that subunit. This chain is Large ribosomal subunit protein bL20, found in Nitrosococcus oceani (strain ATCC 19707 / BCRC 17464 / JCM 30415 / NCIMB 11848 / C-107).